Here is a 416-residue protein sequence, read N- to C-terminus: Glutamyl-tRNA reductase (416 aa).

Substrate is bound by residues 48 to 51 (TCNR), S104, 109 to 111 (EPQ), and Q115. Catalysis depends on C49, which acts as the Nucleophile. Position 184 to 189 (184 to 189 (GAGEMI)) interacts with NADP(+).

This sequence belongs to the glutamyl-tRNA reductase family. As to quaternary structure, homodimer.

It catalyses the reaction (S)-4-amino-5-oxopentanoate + tRNA(Glu) + NADP(+) = L-glutamyl-tRNA(Glu) + NADPH + H(+). It participates in porphyrin-containing compound metabolism; protoporphyrin-IX biosynthesis; 5-aminolevulinate from L-glutamyl-tRNA(Glu): step 1/2. Catalyzes the NADPH-dependent reduction of glutamyl-tRNA(Glu) to glutamate 1-semialdehyde (GSA). The protein is Glutamyl-tRNA reductase of Dechloromonas aromatica (strain RCB).